The chain runs to 907 residues: Valine--tRNA ligase (907 aa).

The short motif at 45–55 is the 'HIGH' region element; sequence PNVTGSLHMGH. A 'KMSKS' region motif is present at residues 554 to 558; that stretch reads KMSKS. Lysine 557 is an ATP binding site. A coiled-coil region spans residues 838–870; the sequence is GQLIDLEAERARLVKNVSKIEQDIEKISVKLNN.

The protein belongs to the class-I aminoacyl-tRNA synthetase family. ValS type 1 subfamily. As to quaternary structure, monomer.

The protein localises to the cytoplasm. It catalyses the reaction tRNA(Val) + L-valine + ATP = L-valyl-tRNA(Val) + AMP + diphosphate. Catalyzes the attachment of valine to tRNA(Val). As ValRS can inadvertently accommodate and process structurally similar amino acids such as threonine, to avoid such errors, it has a 'posttransfer' editing activity that hydrolyzes mischarged Thr-tRNA(Val) in a tRNA-dependent manner. This chain is Valine--tRNA ligase, found in Bartonella quintana (strain Toulouse) (Rochalimaea quintana).